The primary structure comprises 588 residues: Nuclear hormone receptor family member nhr-23 (588 aa).

The tract at residues 50 to 73 is disordered; sequence LHAKSSLQPSLSIETPKSKENDES. A compositionally biased stretch (polar residues) spans 52–64; that stretch reads AKSSLQPSLSIET. The nuclear receptor DNA-binding region spans 160 to 235; it reads VIPCKVCGDK…LGMSRDAVKF (76 aa). NR C4-type zinc fingers lie at residues 163-183 and 199-223; these read CKVCGDKSSGVHYGVITCEGC and CPRQKNCVVDRVNRNRCQYCRLKKC. Positions 345–586 constitute an NR LBD domain; it reads PEEDVATRVI…ALYKELFTAD (242 aa).

This sequence belongs to the nuclear hormone receptor family. NR1 subfamily. Expressed in the germline and oocytes and is a maternal gene product. In males and sperm-producing hermaphrodites, expressed in early pachytene spermatocytes, increasing in level throughout late pachytene. Expression is undetectable in meiotically dividing spermatocytes or mature spermatids.

It is found in the nucleus. Its function is as follows. Orphan nuclear receptor. Transcription factor. Modulates expression of target genes, such as Period protein homolog lin-42 and microRNA let-7, by binding to hormone response elements (HRE). Involved in promoting oscillatory expression of the primary transcripts of let-7 and paralogous microRNAs miR-48, miR-84, and miR-241. Plays a role in normal development and required to regulate each larval molt. Involved in regulating both the frequency and number of molts, acting as part of a negative feedback loop with the let-7 family of microRNAs, perhaps contributing to a self-sustaining molecular-genetic oscillator. Positively modulates expression of collagen and hedgehog-related genes. Involved in development of the gonad and associated epidermal structures. Required in spermatogenesis, acting following the sperm/oocyte cell fate decision, downstream of the canonical sex-determination pathway. Involved in regulating formation of the sperm-specific fibrous body-membranous organelle (FB-MO) complexes, acting independently of transcription regulator spe-44. The protein is Nuclear hormone receptor family member nhr-23 of Caenorhabditis elegans.